We begin with the raw amino-acid sequence, 321 residues long: Glutathione synthetase (321 aa).

One can recognise an ATP-grasp domain in the interval 125–311; sequence EKLFTGWFPH…IAGQFIAFLE (187 aa). 151–208 serves as a coordination point for ATP; it reads FIREQKEVVIKPLGAMAGESIFYLTVNDPNIPVVIETMTANGHQLVMAQRFIPEVKSG. Glu-282 and Asn-284 together coordinate Mg(2+).

Belongs to the prokaryotic GSH synthase family. Mg(2+) serves as cofactor. It depends on Mn(2+) as a cofactor.

It catalyses the reaction gamma-L-glutamyl-L-cysteine + glycine + ATP = glutathione + ADP + phosphate + H(+). It participates in sulfur metabolism; glutathione biosynthesis; glutathione from L-cysteine and L-glutamate: step 2/2. The chain is Glutathione synthetase from Coxiella burnetii (strain RSA 493 / Nine Mile phase I).